The primary structure comprises 309 residues: CDK-activating kinase assembly factor MAT1 (309 aa).

The segment at 6 to 50 (CPRCKTTKYRNPSLKLMVNVCGHTLCESCVELLFVRGSGSCQECD) adopts an RING-type zinc-finger fold. The UIM domain occupies 142–161 (REQEELEEALEMEKHENEQR).

Associates with CDK7 and cyclin H.

It is found in the nucleus. In terms of biological role, stabilizes the cyclin H-CDK7 complex to form a functional CDK-activating kinase (CAK) enzymatic complex. In Xenopus laevis (African clawed frog), this protein is CDK-activating kinase assembly factor MAT1 (mnat1).